The following is a 221-amino-acid chain: MADLKVGSTTGGSVIWHQGNFPLNPAGDDVLYKSFKIYSEYNKPQAADNDFVSKANGGTYASKVTFNAGIQVPYAPNIMSPCGIYGGNGDGATFDKANIDIVSWYGVGFKSSFGSTGRTVVINTRNGDINTKGVVSAAGQVRSGAAAPIAANDLTRKDYVDGAINTVTANANSRVLRSGDTMTGNLTAPNFFSQNPASQPSHVPRFDQIVIKDSVQDFGYY.

The protein belongs to the tevenvirinae tail fiber protein p36 family. As to quaternary structure, the long-tail fibers are trimeric, with a stoichiometry of gp34/gp37/gp36/gp35 of 3:3:3:1.

The protein resides in the virion. Functionally, structural component of the distal-half of the long-tail fiber. The long-tail fiber of T4 is about 1600 Angstroms long with a kink in the middle that divides the fiber into proximal and distal halves. The thin tip of the distal half-fiber interacts with the bacterial lipopolysaccharide receptor and specifies the host range of the phage. This Escherichia coli (Bacteriophage T4) protein is Long-tail fiber protein gp36 (36).